The primary structure comprises 496 residues: Protein RepR (496 aa).

A DNA-binding region spans residues 120 to 141 (SDILTTAIDLGFMPTLIIKSDK).

Functionally, essential for replication. In Streptococcus agalactiae, this protein is Protein RepR (repR).